The chain runs to 300 residues: uncharacterized protein (300 aa).

Positions 1-19 (MKLKLLLIPLLGSSLLLSA) are cleaved as a signal peptide. Cysteine 20 carries the N-palmitoyl cysteine lipid modification. Cysteine 20 is lipidated: S-diacylglycerol cysteine.

The protein belongs to the MG439/MG440 family.

It localises to the cell membrane. This is an uncharacterized protein from Mycoplasma pneumoniae (strain ATCC 29342 / M129 / Subtype 1) (Mycoplasmoides pneumoniae).